The chain runs to 935 residues: MVEASEGTLEPIGAVQRTLVGREATEPMRADIRLLGAILGDTVREQNGQQVFELVERARVESFRVRRSEIDRAELARMFAGIDIHQAIPVIRAFSHFALLANVAEDIHRERRRAIHVAAGEPPQDSSLAATYAKLDRAQLDSAMVAEALRGAVVSPVITAHPTETRRRTVFVTQHRITELMRLHAEGHTETDDGRNIELELRRQVLTLWQTALIRLSRLQITDEIEVGLRYYAAAFFKVIPQVNAEVRNALRARWPGADLLDEPIVAPGSWIGGDRDGNPNVTADVVRRATGDAAYTALAHYLAELTACEQELSMSARLVAVTPELAALAEDCAEKARADEPYRRALRVIRGRLTATAAEILDRRPQHELDLGLPPYATPAELRADLDTVDASLRAHGSALLADDRLALLREGVRVFGFHLCGLDMRQNSDVHEEVVAELLAWAGVHPDYRSLPEDERVELLAAELGTRRPLVGDRAELSELADKELGVVRAAAHAIRRYGPAAVPNYVISMCRSVSDVLEAAILLKEAGLIDASGPEPYCPVGISPLLETIEDLHNGAAILHAMLELPLYRALVAARGQSQEVMLGYSDSNKDGGYLASSWAVYRAELALVEVARKIGIRLRLFHGRGGTVGRGGGPSYEAILAQPPGAVNGSLRLTEQGEVIAAKYAEPQVAQRNLESLVAATLESTLLDVEGLGDTAEPAYAVLDEVAVLAQRAYAELVHETPGFVDYFMASTPVSEIGSLNIGSRPTSRKPTESIADLRAIPWVLAWSQSRVMLPGWYGTGSAFEQWIAAGPQSRAERVDILHDLYRRWPFFRSVLSNLAQVLAKSDLGLAAQYAELVDDAALRRRVFGKIADEHRRTIAMHKLITGQDNLLADNPALARSVFNRFPYLEPLNHLQVELLRRYRSGDDDELVQRGILLTMNGLASALRNSG.

Catalysis depends on residues His161 and Lys593.

This sequence belongs to the PEPCase type 1 family. It depends on Mg(2+) as a cofactor.

The enzyme catalyses oxaloacetate + phosphate = phosphoenolpyruvate + hydrogencarbonate. Functionally, forms oxaloacetate, a four-carbon dicarboxylic acid source for the tricarboxylic acid cycle. The chain is Phosphoenolpyruvate carboxylase from Mycolicibacterium paratuberculosis (strain ATCC BAA-968 / K-10) (Mycobacterium paratuberculosis).